The sequence spans 385 residues: NifS/IcsS protein homolog (385 aa).

Residues 69–70 (GT), N149, Q178, and 199–201 (SSH) contribute to the pyridoxal 5'-phosphate site. K202 bears the N6-(pyridoxal phosphate)lysine mark. T237 is a pyridoxal 5'-phosphate binding site. The Cysteine persulfide intermediate role is filled by C325. [2Fe-2S] cluster is bound at residue C325.

Belongs to the class-V pyridoxal-phosphate-dependent aminotransferase family. NifS/IscS subfamily. Pyridoxal 5'-phosphate serves as cofactor.

The protein is NifS/IcsS protein homolog of Lactobacillus delbrueckii subsp. bulgaricus (strain ATCC 11842 / DSM 20081 / BCRC 10696 / JCM 1002 / NBRC 13953 / NCIMB 11778 / NCTC 12712 / WDCM 00102 / Lb 14).